Here is a 1010-residue protein sequence, read N- to C-terminus: Sodium/potassium-transporting ATPase subunit alpha-3 (1010 aa).

The tract at residues 1–21 (MGDKGEKESPKKGKGKRDLDD) is disordered. Residues 1–74 (MGDKGEKESP…NALTPPPTTP (74 aa)) are Cytoplasmic-facing. Residues 69–71 (PPP) are interaction with phosphoinositide-3 kinase. Residues 75–95 (EWVKFCRQLFGGFSILLWIGA) form a helical membrane-spanning segment. Residues 96–118 (ILCFLAYGIQAGTEDEPSNDNLY) are Extracellular-facing. The chain crosses the membrane as a helical span at residues 119 to 139 (LGIVLAAVVIITGCFSYYQEA). The Cytoplasmic portion of the chain corresponds to 140–275 (KSSKIMESFK…VGKTPIAVEI (136 aa)). The chain crosses the membrane as a helical span at residues 276-295 (EHFIQLITGVAVFLGISFFV). Residues 296–307 (LSLILGYTWLEA) are Extracellular-facing. A helical membrane pass occupies residues 308-325 (VIFLIGIIVANVPEGLLA). At 326–759 (TVTVCLTLTA…EEGRLIFDNL (434 aa)) the chain is on the cytoplasmic side. The active-site 4-aspartylphosphate intermediate is Asp363. Residues Asp704 and Asp708 each contribute to the Mg(2+) site. A helical transmembrane segment spans residues 760–779 (KKSIAYTLTSNIPEITPFLL). The Extracellular segment spans residues 780–789 (FIMANIPLPL). A helical membrane pass occupies residues 790 to 810 (GTITILCIDLGTDMVPAISLA). Residues 811–830 (YEAAESDIMKRQPRNPRSDK) are Cytoplasmic-facing. A helical membrane pass occupies residues 831–853 (LVNERLISMAYGQIGMIQALGGF). Over 854–905 (FSYFVILAENGFLPSCLVGIRLSWDDRTINDLEDSYGQQWTYEQRKVVEFTC) the chain is Extracellular. The helical transmembrane segment at 906 to 925 (HTAFFVSIVVVQWADLIICK) threads the bilayer. Residues 926-938 (TRRNSVFQQGMKN) lie on the Cytoplasmic side of the membrane. Ser930 is subject to Phosphoserine; by PKA. Residues 939–957 (KILIFGLFEETALAAFLSY) form a helical membrane-spanning segment. Residues 958–972 (CPGMDVALRMYPLKP) lie on the Extracellular side of the membrane. Residues 973-993 (SWWFCAFPYSFLIFVYDEIRK) form a helical membrane-spanning segment. Topologically, residues 994 to 1010 (LILRRNPGGWVEKETYY) are cytoplasmic.

This sequence belongs to the cation transport ATPase (P-type) (TC 3.A.3) family. Type IIC subfamily. As to quaternary structure, the sodium/potassium-transporting ATPase is composed of a catalytic alpha subunit, an auxiliary non-catalytic beta subunit and an additional regulatory subunit.

Its subcellular location is the cell membrane. The catalysed reaction is K(+)(out) + Na(+)(in) + ATP + H2O = K(+)(in) + Na(+)(out) + ADP + phosphate + H(+). Its function is as follows. This is the catalytic component of the active enzyme, which catalyzes the hydrolysis of ATP coupled with the exchange of sodium and potassium ions across the plasma membrane. This action creates the electrochemical gradient of sodium and potassium ions, providing the energy for active transport of various nutrients. This chain is Sodium/potassium-transporting ATPase subunit alpha-3 (ATP1A3), found in Gallus gallus (Chicken).